Here is a 171-residue protein sequence, read N- to C-terminus: Lipoprotein signal peptidase (171 aa).

3 helical membrane passes run 7–27 (GLLALVLTLILDQATKLGLYF), 64–84 (IGRWLLVALSLAAAIGLGLWM), and 88–108 (TSRLLGIALGLIVGGALGNAI). Active-site residues include aspartate 118 and aspartate 136. A helical membrane pass occupies residues 128-148 (SWYVFNVADAAIVAGVIGLIL).

It belongs to the peptidase A8 family.

The protein resides in the cell inner membrane. The enzyme catalyses Release of signal peptides from bacterial membrane prolipoproteins. Hydrolyzes -Xaa-Yaa-Zaa-|-(S,diacylglyceryl)Cys-, in which Xaa is hydrophobic (preferably Leu), and Yaa (Ala or Ser) and Zaa (Gly or Ala) have small, neutral side chains.. Its pathway is protein modification; lipoprotein biosynthesis (signal peptide cleavage). In terms of biological role, this protein specifically catalyzes the removal of signal peptides from prolipoproteins. This chain is Lipoprotein signal peptidase, found in Methylobacterium radiotolerans (strain ATCC 27329 / DSM 1819 / JCM 2831 / NBRC 15690 / NCIMB 10815 / 0-1).